Consider the following 199-residue polypeptide: Recombination protein RecR (199 aa).

Residues cysteine 57–cysteine 72 form a C4-type zinc finger. The Toprim domain maps to threonine 80–proline 176.

This sequence belongs to the RecR family.

Its function is as follows. May play a role in DNA repair. It seems to be involved in an RecBC-independent recombinational process of DNA repair. It may act with RecF and RecO. The polypeptide is Recombination protein RecR (Shouchella clausii (strain KSM-K16) (Alkalihalobacillus clausii)).